The primary structure comprises 556 residues: Small ribosomal subunit protein uS3m (556 aa).

Belongs to the universal ribosomal protein uS3 family. As to quaternary structure, component of the mitochondrial ribosome small subunit.

Its subcellular location is the mitochondrion. In Arabidopsis thaliana (Mouse-ear cress), this protein is Small ribosomal subunit protein uS3m (RPS3).